Consider the following 168-residue polypeptide: S-ribosylhomocysteine lyase (168 aa).

His54, His58, and Cys128 together coordinate Fe cation.

Belongs to the LuxS family. As to quaternary structure, homodimer. It depends on Fe cation as a cofactor.

The enzyme catalyses S-(5-deoxy-D-ribos-5-yl)-L-homocysteine = (S)-4,5-dihydroxypentane-2,3-dione + L-homocysteine. In terms of biological role, involved in the synthesis of autoinducer 2 (AI-2) which is secreted by bacteria and is used to communicate both the cell density and the metabolic potential of the environment. The regulation of gene expression in response to changes in cell density is called quorum sensing. Catalyzes the transformation of S-ribosylhomocysteine (RHC) to homocysteine (HC) and 4,5-dihydroxy-2,3-pentadione (DPD). This is S-ribosylhomocysteine lyase from Neisseria meningitidis serogroup C (strain 053442).